The chain runs to 218 residues: Glutathione S-transferase (218 aa).

The region spanning 2–88 is the GST N-terminal domain; the sequence is PVTLGYWDIR…YIARKHDLCG (87 aa). Residues 7-8, 46-50, 59-60, and 72-73 contribute to the glutathione site; these read YW, WLNEK, NL, and QS. Residues 90 to 208 enclose the GST C-terminal domain; that stretch reads TEEERIQLDI…KSSRFSCKQI (119 aa). Y116 lines the substrate pocket.

This sequence belongs to the GST superfamily. Mu family. In terms of assembly, homodimer.

It is found in the cytoplasm. The catalysed reaction is RX + glutathione = an S-substituted glutathione + a halide anion + H(+). Functionally, conjugation of reduced glutathione to a wide number of exogenous and endogenous hydrophobic electrophiles. In Mesocricetus auratus (Golden hamster), this protein is Glutathione S-transferase.